The chain runs to 37 residues: uncharacterized protein (37 aa).

A helical transmembrane segment spans residues 16–36; that stretch reads FALIVVLFILLIIVGTAFVGG.

The protein belongs to the SscA family.

Its subcellular location is the membrane. This is an uncharacterized protein from Bacillus subtilis (strain 168).